The following is a 143-amino-acid chain: Nucleoside diphosphate kinase (143 aa).

Residues Lys-11, Phe-59, Arg-87, Thr-93, Arg-104, and Asn-114 each contribute to the ATP site. Residue His-117 is the Pros-phosphohistidine intermediate of the active site.

It belongs to the NDK family. In terms of assembly, homotetramer. Requires Mg(2+) as cofactor.

It localises to the cytoplasm. It catalyses the reaction a 2'-deoxyribonucleoside 5'-diphosphate + ATP = a 2'-deoxyribonucleoside 5'-triphosphate + ADP. It carries out the reaction a ribonucleoside 5'-diphosphate + ATP = a ribonucleoside 5'-triphosphate + ADP. Functionally, major role in the synthesis of nucleoside triphosphates other than ATP. The ATP gamma phosphate is transferred to the NDP beta phosphate via a ping-pong mechanism, using a phosphorylated active-site intermediate. The polypeptide is Nucleoside diphosphate kinase (Pseudomonas aeruginosa (strain UCBPP-PA14)).